The chain runs to 131 residues: Transcription antitermination protein NusB (131 aa).

Belongs to the NusB family.

Involved in transcription antitermination. Required for transcription of ribosomal RNA (rRNA) genes. Binds specifically to the boxA antiterminator sequence of the ribosomal RNA (rrn) operons. In Ligilactobacillus salivarius (strain UCC118) (Lactobacillus salivarius), this protein is Transcription antitermination protein NusB.